Consider the following 824-residue polypeptide: Probable ion channel POLLUX (824 aa).

The span at D45–T54 shows a compositional bias: low complexity. The interval D45 to P70 is disordered. 4 helical membrane-spanning segments follow: residues F81–L101, A135–L155, L198–V218, and I250–I270. 2 RCK N-terminal domains span residues S291–V432 and P550–I699. Residues L325–G346 are a coiled coil.

The protein belongs to the castor/pollux (TC 1.A.1.23) family.

The protein localises to the nucleus membrane. The polypeptide is Probable ion channel POLLUX (Arabidopsis thaliana (Mouse-ear cress)).